The primary structure comprises 401 residues: (1R,4R,5S)-(-)-guaia-6,10(14)-diene synthase (401 aa).

A disordered region spans residues 1-21; it reads MVKFDSGSESEMTNGDDLHIN. Mg(2+)-binding residues include Asp-134 and Glu-139. The DDXXD motif signature appears at 134-138; it reads DDQFD. Arg-242 contacts substrate. The Mg(2+) site is built by Asn-288 and Ser-292. Substrate is bound at residue Lys-295. Asp-296 provides a ligand contact to Mg(2+). 375 to 376 lines the substrate pocket; it reads RY.

It belongs to the terpene synthase family. Mg(2+) serves as cofactor.

It catalyses the reaction (2E,6E)-farnesyl diphosphate = (1R,4R,5S)-(-)-guaia-6,10(14)-diene + diphosphate. The protein operates within secondary metabolite biosynthesis; terpenoid biosynthesis. Catalyzes the conversion of (2E,6E)-farnesyl diphosphate (FPP) to yield the bicyclic sesquiterpene guaia-6,10(14)-diene via a 1,10-cyclization, which requires the abstraction of the pyrophosphate from FPP to yield the (E,E)-germacradienyl cation. The only accepted substrate is farnesyl diphosphate (FPP). The sequence is that of (1R,4R,5S)-(-)-guaia-6,10(14)-diene synthase from Fusarium proliferatum (strain ET1) (Orchid endophyte fungus).